We begin with the raw amino-acid sequence, 245 residues long: 4-hydroxy-tetrahydrodipicolinate reductase (245 aa).

NAD(+) contacts are provided by residues 7–12 (GAKGKV), aspartate 33, 75–77 (GTT), and 102–105 (APNF). Histidine 132 functions as the Proton donor/acceptor in the catalytic mechanism. Histidine 133 lines the (S)-2,3,4,5-tetrahydrodipicolinate pocket. The active-site Proton donor is the lysine 136. 142–143 (GT) serves as a coordination point for (S)-2,3,4,5-tetrahydrodipicolinate.

It belongs to the DapB family.

It localises to the cytoplasm. It catalyses the reaction (S)-2,3,4,5-tetrahydrodipicolinate + NAD(+) + H2O = (2S,4S)-4-hydroxy-2,3,4,5-tetrahydrodipicolinate + NADH + H(+). It carries out the reaction (S)-2,3,4,5-tetrahydrodipicolinate + NADP(+) + H2O = (2S,4S)-4-hydroxy-2,3,4,5-tetrahydrodipicolinate + NADPH + H(+). It participates in amino-acid biosynthesis; L-lysine biosynthesis via DAP pathway; (S)-tetrahydrodipicolinate from L-aspartate: step 4/4. Catalyzes the conversion of 4-hydroxy-tetrahydrodipicolinate (HTPA) to tetrahydrodipicolinate. The sequence is that of 4-hydroxy-tetrahydrodipicolinate reductase from Mycolicibacterium paratuberculosis (strain ATCC BAA-968 / K-10) (Mycobacterium paratuberculosis).